A 282-amino-acid chain; its full sequence is Hepatitis A virus cellular receptor 2 homolog (282 aa).

The signal sequence occupies residues 1–21 (MFSWLPFSCALLLLQPLPARS). An Ig-like V-type domain is found at 22–131 (LENAYTAEVG…EKLELKLSIT (110 aa)). Topologically, residues 22–194 (LENAYTAEVG…KDSGETIRTA (173 aa)) are extracellular. Disulfide bonds link C38–C111, C52–C63, and C58–C110. Q62 serves as a coordination point for a 1,2-diacyl-sn-glycero-3-phospho-L-serine. 2 N-linked (GlcNAc...) asparagine glycosylation sites follow: N74 and N100. Residue R112 coordinates a 1,2-diacyl-sn-glycero-3-phospho-L-serine. Ca(2+)-binding residues include F115 and G117. M119 lines the a 1,2-diacyl-sn-glycero-3-phospho-L-serine pocket. Residue N120 coordinates Ca(2+). The interval 138 to 163 (PAGTAHGDSTTASPRTLTTEGSGSET) is disordered. The segment covering 144–163 (GDSTTASPRTLTTEGSGSET) has biased composition (polar residues). An O-linked (GalNAc...) threonine glycan is attached at T147. A glycan (N-linked (GlcNAc...) asparagine) is linked at N173. The chain crosses the membrane as a helical span at residues 195-215 (VHIGVGVSAGLALALILGVLI). Residues 216–282 (LKWYSSKKKK…YCYVSSQQPS (67 aa)) lie on the Cytoplasmic side of the membrane. Residues 253-271 (EENIYTIEENIYEMENSNE) are interaction with BAG6. Phosphotyrosine; by ITK is present on Y257.

The protein belongs to the immunoglobulin superfamily. TIM family. As to quaternary structure, interacts with HMGB1; impairs HMGB1 binding to B-DNA and likely HMGB1-mediated innate immune response. Interacts with BAG6. Interacts (phosphorylated) with PIK3R1 and PIK3R2. Interacts (not dependent on its phosphorylation status) with FYN. Interacts (in basal state T-cells) with VAV1; AKT1/2, LCP2, ZAP70, SYK, PIK3R1, FYN, SH3BP2 and SH2D2A. Interacts (in activated T-cells) with LCK and PLCG. Interacts with ILF3; this interaction promotes ILF3 ubiquitination and degradation.

The protein resides in the membrane. The protein localises to the cell junction. Cell surface receptor implicated in modulating innate and adaptive immune responses. Generally accepted to have an inhibiting function. Reports on stimulating functions suggest that the activity may be influenced by the cellular context and/or the respective ligand. Regulates macrophage activation. Inhibits T-helper type 1 lymphocyte (Th1)-mediated auto- and alloimmune responses and promotes immunological tolerance. In CD8+ cells attenuates TCR-induced signaling, specifically by blocking NF-kappaB and NFAT promoter activities resulting in the loss of IL-2 secretion. The function may implicate its association with LCK proposed to impair phosphorylation of TCR subunits. In contrast, shown to activate TCR-induced signaling in T-cells probably implicating ZAP70, LCP2, LCK and FYN. Expressed on Treg cells can inhibit Th17 cell responses. Receptor for LGALS9. Binding to LGALS9 is believed to result in suppression of T-cell responses; the resulting apoptosis of antigen-specific cells may implicate HAVCR2 phosphorylation and disruption of its association with BAG6. Binding to LGALS9 is proposed to be involved in innate immune response to intracellular pathogens. Expressed on Th1 cells interacts with LGALS9 expressed on Mycobacterium tuberculosis-infected macrophages to stimulate antibactericidal activity including IL-1 beta secretion and to restrict intracellular bacterial growth. However, the function as receptor for LGALS9 has been challenged. Also reported to enhance CD8+ T cell responses to an acute infection such as by Listeria monocytogenes. Receptor for phosphatidylserine (PtSer); PtSer-binding is calcium-dependent. May recognize PtSer on apoptotic cells leading to their phagocytosis. Mediates the engulfment of apoptotic cells by dendritic cells. Expressed on T-cells, promotes conjugation but not engulfment of apoptotic cells. Expressed on dendritic cells (DCs) positively regulates innate immune response and in synergy with Toll-like receptors promotes secretion of TNF-alpha. In tumor-imfiltrating DCs suppresses nucleic acid-mediated innate immune repsonse by interaction with HMGB1 and interfering with nucleic acid-sensing and trafficking of nucleid acids to endosomes. Can enhance mast cell production of Th2 cytokines Il-4, IL-6 and IL-13. Expressed on natural killer (NK) cells acts as a coreceptor to enhance IFN-gamma production in response to LGALS9. In contrast, shown to suppress NK cell-mediated cytotoxicity. Negatively regulates NK cell function in LPS-induced endotoxic shock. This Rattus norvegicus (Rat) protein is Hepatitis A virus cellular receptor 2 homolog (Havcr2).